The sequence spans 381 residues: Protein palisade (381 aa).

Positions 1-25 (MMMHSRNRSWTLTLLALGVVLATSA) are cleaved as a signal peptide. 6 repeat units span residues 190-199 (PAAPAYEAPA), 200-209 (PPAPAYEAPA), 210-219 (PPAPAYEAPA), 220-229 (PAAPAYEAPA), 230-239 (PAAPAYEAPT), and 247-256 (PPAPAYEPPA). Residues 190–256 (PAAPAYEAPA…PPAPAYEPPA (67 aa)) are 6 X 10 AA approximate tandem repeats of P-[AP]-A-P-A-Y-E-[AP]-P-[AT]. Disordered stretches follow at residues 236-270 (EAPTTDYSAPAPPAPAYEPPASSYTQGYSQPAQPS) and 309-329 (TPTAPPPPPPPAPVYEAPSQN). A compositionally biased stretch (pro residues) spans 311–321 (TAPPPPPPPAP).

Sulfated by pip; may be involved in embryo dorsal-ventral axis determination. Sulfation by pip may occur on covalently bound glycosaminoglycans. Post-translationally, may undergo both disulfide and non-disulfide cross-linking upon incorporation into the vitelline membrane. Present in the perivitelline space of stage 10 egg chambers and in the vitelline membrane adjacent to the oocyte in stage 13 and 14 egg chambers (at protein level).

The protein resides in the secreted. It is found in the extracellular space. The protein localises to the extracellular matrix. Minor protein component of the vitelline membrane. Involved in vitelline membrane biogenesis during late stages of oogenesis. Required for efficient disulfide and non-disulfide cross-linking of several vitelline membrane components. The polypeptide is Protein palisade (Drosophila melanogaster (Fruit fly)).